Consider the following 302-residue polypeptide: m7GpppN-mRNA hydrolase NUDT17 (302 aa).

Positions 89 to 237 (GRGVDLGVAV…DGTETPKHLP (149 aa)) constitute a Nudix hydrolase domain. A Nudix box motif is present at residues 128-149 (GHVEPDEELLDGGLRELWEESG). Glu143 and Glu147 together coordinate Mg(2+).

This sequence belongs to the Nudix hydrolase family. It depends on Mg(2+) as a cofactor. Mn(2+) serves as cofactor.

It carries out the reaction a 5'-end (N(7)-methyl 5'-triphosphoguanosine)-ribonucleoside in mRNA + H2O = N(7)-methyl-GDP + a 5'-end phospho-ribonucleoside in mRNA + 2 H(+). Acts as a decapping enzyme capable of hydrolyzing monomethylated capped RNAs (in vitro). Hydrolyzes monomethylated capped RNA after alpha and beta phosphates to form N(7)-methyl-GDP. Shows low activity towards unmethylated capped RNA. The sequence is that of m7GpppN-mRNA hydrolase NUDT17 (NUDT17) from Bos taurus (Bovine).